Consider the following 318-residue polypeptide: NADH-ubiquinone oxidoreductase chain 1 (318 aa).

8 consecutive transmembrane segments (helical) span residues 3–23, 70–90, 100–120, 146–166, 171–191, 222–242, 254–273, and 294–314; these read LITLLSTIVPILLAVAFLTLV, MFIIAPILALALALTMWTPLP, LGILFMLAMSSLAVYAILWSG, LAIILLSILLMSGSYSLTTLI, YIWLILPSWPLTMMWFISTLA, LFFLAEYANIIMMNALTTILF, LYTTNFATKTLLLTMSFLWI, and LPLTLALCMWYVTMPIMLASI.

This sequence belongs to the complex I subunit 1 family.

It is found in the mitochondrion inner membrane. The enzyme catalyses a ubiquinone + NADH + 5 H(+)(in) = a ubiquinol + NAD(+) + 4 H(+)(out). Functionally, core subunit of the mitochondrial membrane respiratory chain NADH dehydrogenase (Complex I) that is believed to belong to the minimal assembly required for catalysis. Complex I functions in the transfer of electrons from NADH to the respiratory chain. The immediate electron acceptor for the enzyme is believed to be ubiquinone. The chain is NADH-ubiquinone oxidoreductase chain 1 (MT-ND1) from Phyllostomus elongatus (Lesser spear-nosed bat).